The following is an 89-amino-acid chain: Small ribosomal subunit protein uS15 (89 aa).

Belongs to the universal ribosomal protein uS15 family. In terms of assembly, part of the 30S ribosomal subunit. Forms a bridge to the 50S subunit in the 70S ribosome, contacting the 23S rRNA.

One of the primary rRNA binding proteins, it binds directly to 16S rRNA where it helps nucleate assembly of the platform of the 30S subunit by binding and bridging several RNA helices of the 16S rRNA. Functionally, forms an intersubunit bridge (bridge B4) with the 23S rRNA of the 50S subunit in the ribosome. This is Small ribosomal subunit protein uS15 from Pseudoalteromonas atlantica (strain T6c / ATCC BAA-1087).